A 156-amino-acid polypeptide reads, in one-letter code: Small ribosomal subunit protein uS7 (156 aa).

It belongs to the universal ribosomal protein uS7 family. As to quaternary structure, part of the 30S ribosomal subunit. Contacts proteins S9 and S11.

Its function is as follows. One of the primary rRNA binding proteins, it binds directly to 16S rRNA where it nucleates assembly of the head domain of the 30S subunit. Is located at the subunit interface close to the decoding center, probably blocks exit of the E-site tRNA. This chain is Small ribosomal subunit protein uS7, found in Finegoldia magna (strain ATCC 29328 / DSM 20472 / WAL 2508) (Peptostreptococcus magnus).